The following is a 604-amino-acid chain: Choline transporter-like protein 3 (604 aa).

2 N-linked (GlcNAc...) asparagine glycosylation sites follow: Asn-90 and Asn-103. 5 consecutive transmembrane segments (helical) span residues 165–185, 195–215, 237–257, 286–306, and 330–350; these read DTIL…LFTF, IIIS…WWLY, LAFA…IFTL, LWTF…LLSL, and YLWW…LTCQ. Residues Asn-454 and Asn-472 are each glycosylated (N-linked (GlcNAc...) asparagine). The next 2 helical transmembrane spans lie at 485 to 505 and 514 to 534; these read FIIF…GLMA and VWAI…HSFL. Polar residues predominate over residues 581-592; that stretch reads NARSQGHKNSLP. The disordered stretch occupies residues 581-604; the sequence is NARSQGHKNSLPNEEGTELRPIVR.

Belongs to the CTL (choline transporter-like) family. In terms of tissue distribution, expressed in colon, kidney and ileum.

The protein localises to the membrane. This is Choline transporter-like protein 3 (Slc44a3) from Rattus norvegicus (Rat).